Here is a 166-residue protein sequence, read N- to C-terminus: Ribosomal RNA large subunit methyltransferase H (166 aa).

S-adenosyl-L-methionine is bound by residues Leu85, Gly116, and Ile135–Phe140.

It belongs to the RNA methyltransferase RlmH family. Homodimer.

It is found in the cytoplasm. It catalyses the reaction pseudouridine(1915) in 23S rRNA + S-adenosyl-L-methionine = N(3)-methylpseudouridine(1915) in 23S rRNA + S-adenosyl-L-homocysteine + H(+). In terms of biological role, specifically methylates the pseudouridine at position 1915 (m3Psi1915) in 23S rRNA. This chain is Ribosomal RNA large subunit methyltransferase H, found in Francisella tularensis subsp. holarctica (strain FTNF002-00 / FTA).